A 297-amino-acid chain; its full sequence is Heme A synthase (297 aa).

Residues 1 to 6 (MHKRLK) are Cytoplasmic-facing. The chain crosses the membrane as a helical span at residues 7–27 (IYSVITSIGVLIVLLQGALVT). Residues 28 to 62 (KTGSGEGCGATWPLCFGEVIPTNPAIETIIEYSHR) lie on the Extracellular side of the membrane. Residues cysteine 35 and cysteine 42 are joined by a disulfide bond. The active site involves glutamate 58. Histidine 61 is a binding site for heme o. Residues 63-83 (IVSGLVGAMIIILAIWAWKQL) traverse the membrane as a helical segment. The Cytoplasmic portion of the chain corresponds to 84-93 (KHMREAKALS). The helical transmembrane segment at 94 to 114 (FAAVILIIFQGLLGAGAVVFG) threads the bilayer. Residues 115 to 118 (QSKA) are Extracellular-facing. The chain crosses the membrane as a helical span at residues 119–139 (ILALHFGISAMSLAAVVLLTI). A heme o-binding site is contributed by histidine 123. Residues 140–156 (LAFEDGREHTMAPKVSR) are Cytoplasmic-facing. A helical transmembrane segment spans residues 157–177 (GFKYYVFFVITYCYAVIYSGA). Over 178–210 (YVKHSEATLACAGFPLCNGQIFPGLYGPVGAHY) the chain is Extracellular. The cysteines at positions 188 and 194 are disulfide-linked. A helical membrane pass occupies residues 211–231 (FHRVVGTILLLFLLILMIWTL). Residue histidine 212 coordinates heme b. The Cytoplasmic segment spans residues 232 to 242 (SRYRHYRVLTW). A helical transmembrane segment spans residues 243 to 263 (TAVLSFLLVVGQFISGISIVF). Topologically, residues 264–271 (TQNALSVG) are extracellular. Residues 272-292 (LIHALIISILFSALSYMTMII) form a helical membrane-spanning segment. Histidine 274 contributes to the heme b binding site. Residues 293-297 (TRPSH) are Cytoplasmic-facing.

The protein belongs to the COX15/CtaA family. Type 1 subfamily. As to quaternary structure, interacts with CtaB. Heme b serves as cofactor.

It is found in the cell membrane. It carries out the reaction Fe(II)-heme o + 2 A + H2O = Fe(II)-heme a + 2 AH2. It participates in porphyrin-containing compound metabolism; heme A biosynthesis; heme A from heme O: step 1/1. Functionally, catalyzes the conversion of heme O to heme A by two successive hydroxylations of the methyl group at C8. The first hydroxylation forms heme I, the second hydroxylation results in an unstable dihydroxymethyl group, which spontaneously dehydrates, resulting in the formyl group of heme A. This is Heme A synthase from Alkalihalophilus pseudofirmus (strain ATCC BAA-2126 / JCM 17055 / OF4) (Bacillus pseudofirmus).